Here is a 115-residue protein sequence, read N- to C-terminus: Glycine cleavage system H-like protein (115 aa).

The 83-residue stretch at 17-99 (VVRLGLTEKM…EGEGWLAVVR (83 aa)) folds into the Lipoyl-binding domain. Position 58 is an N6-lipoyllysine (lysine 58).

It belongs to the GcvH family. (R)-lipoate serves as cofactor.

The sequence is that of Glycine cleavage system H-like protein from Chlamydia pneumoniae (Chlamydophila pneumoniae).